The sequence spans 208 residues: Protein-L-isoaspartate O-methyltransferase (208 aa).

Residue Ser59 is part of the active site.

Belongs to the methyltransferase superfamily. L-isoaspartyl/D-aspartyl protein methyltransferase family.

It is found in the cytoplasm. The catalysed reaction is [protein]-L-isoaspartate + S-adenosyl-L-methionine = [protein]-L-isoaspartate alpha-methyl ester + S-adenosyl-L-homocysteine. In terms of biological role, catalyzes the methyl esterification of L-isoaspartyl residues in peptides and proteins that result from spontaneous decomposition of normal L-aspartyl and L-asparaginyl residues. It plays a role in the repair and/or degradation of damaged proteins. The sequence is that of Protein-L-isoaspartate O-methyltransferase from Escherichia coli O7:K1 (strain IAI39 / ExPEC).